Reading from the N-terminus, the 308-residue chain is tRNA pseudouridine synthase B (308 aa).

Asp-37 acts as the Nucleophile in catalysis.

The protein belongs to the pseudouridine synthase TruB family. Type 1 subfamily.

It carries out the reaction uridine(55) in tRNA = pseudouridine(55) in tRNA. Responsible for synthesis of pseudouridine from uracil-55 in the psi GC loop of transfer RNAs. In Deinococcus radiodurans (strain ATCC 13939 / DSM 20539 / JCM 16871 / CCUG 27074 / LMG 4051 / NBRC 15346 / NCIMB 9279 / VKM B-1422 / R1), this protein is tRNA pseudouridine synthase B.